Consider the following 196-residue polypeptide: Putative tyrosine-protein phosphatase OCA1 (196 aa).

The region spanning 33-192 is the Tyrosine-protein phosphatase domain; sequence NFCPVEKQLY…SVQIDPTKMP (160 aa). C130 (phosphocysteine intermediate) is an active-site residue.

It belongs to the protein-tyrosine phosphatase family.

The protein localises to the cytoplasm. The catalysed reaction is O-phospho-L-tyrosyl-[protein] + H2O = L-tyrosyl-[protein] + phosphate. Its function is as follows. Putative tyrosine-protein phosphatase required for protection against superoxide stress. The polypeptide is Putative tyrosine-protein phosphatase OCA1 (OCA1) (Debaryomyces hansenii (strain ATCC 36239 / CBS 767 / BCRC 21394 / JCM 1990 / NBRC 0083 / IGC 2968) (Yeast)).